Consider the following 74-residue polypeptide: uncharacterized protein (74 aa).

Residues 54-72 (LIIPRFLLLIYSVIQCLFL) form a helical membrane-spanning segment.

It localises to the membrane. This is an uncharacterized protein from Saccharomyces cerevisiae (strain ATCC 204508 / S288c) (Baker's yeast).